Reading from the N-terminus, the 153-residue chain is Aspartate carbamoyltransferase regulatory chain (153 aa).

Zn(2+) is bound by residues Cys110, Cys115, Cys138, and Cys141.

This sequence belongs to the PyrI family. As to quaternary structure, contains catalytic and regulatory chains. The cofactor is Zn(2+).

Involved in allosteric regulation of aspartate carbamoyltransferase. This chain is Aspartate carbamoyltransferase regulatory chain, found in Bacteroides thetaiotaomicron (strain ATCC 29148 / DSM 2079 / JCM 5827 / CCUG 10774 / NCTC 10582 / VPI-5482 / E50).